The sequence spans 184 residues: MSSRSTWALLRLPLPLIRICSGKWGLRLQEKPALLFPGMAASTVQVAGRKDYPALLPLNESELEEQFVKGHGPGGQATNKTSNCVVLKHVPSGIVVKCHQTRSVDQNRKIARKVLQEKVDVFYNGENSPVHKEKLEAERRKRERKKRAKETLEKKKLLKELREASQNITEKKADADGIPRGFQE.

Residues 1 to 98 (MSSRSTWALL…HVPSGIVVKC (98 aa)) constitute a mitochondrion transit peptide. The segment at 60-124 (ESELEEQFVK…LQEKVDVFYN (65 aa)) is GGQ domain. Residues 74–76 (GGQ) carry the GGQ motif. N5-methylglutamine is present on Q76. Residues 130-178 (VHKEKLEAERRKRERKKRAKETLEKKKLLKELREASQNITEKKADADGI) are a coiled coil. The disordered stretch occupies residues 132-184 (KEKLEAERRKRERKKRAKETLEKKKLLKELREASQNITEKKADADGIPRGFQE). Residues 149-184 (KETLEKKKLLKELREASQNITEKKADADGIPRGFQE) show a composition bias toward basic and acidic residues.

Belongs to the prokaryotic/mitochondrial release factor family. Interacts (via C-terminus) with MTRES1 (via S4 domain). Associates with mitoribosomal S39 large subunit, peptidyl tRNA and nascent chain. Post-translationally, methylation of glutamine in the GGQ triplet by HEMK1.

It is found in the mitochondrion. Functionally, part of a mitoribosome-associated quality control pathway that prevents aberrant translation by responding to interruptions during elongation. As heterodimer with MTRES1, ejects the unfinished nascent chain and peptidyl transfer RNA (tRNA), respectively, from stalled ribosomes. Recruitment of mitoribosome biogenesis factors to these quality control intermediates suggests additional roles for MTRES1 and MTRF during mitoribosome rescue. The chain is Mitochondrial translation release factor in rescue from Mus musculus (Mouse).